The primary structure comprises 399 residues: Tryptophan synthase beta chain (399 aa).

The residue at position 92 (Lys-92) is an N6-(pyridoxal phosphate)lysine.

The protein belongs to the TrpB family. As to quaternary structure, tetramer of two alpha and two beta chains. Pyridoxal 5'-phosphate is required as a cofactor.

It carries out the reaction (1S,2R)-1-C-(indol-3-yl)glycerol 3-phosphate + L-serine = D-glyceraldehyde 3-phosphate + L-tryptophan + H2O. The protein operates within amino-acid biosynthesis; L-tryptophan biosynthesis; L-tryptophan from chorismate: step 5/5. Its function is as follows. The beta subunit is responsible for the synthesis of L-tryptophan from indole and L-serine. This Exiguobacterium sibiricum (strain DSM 17290 / CCUG 55495 / CIP 109462 / JCM 13490 / 255-15) protein is Tryptophan synthase beta chain.